Reading from the N-terminus, the 213-residue chain is MGADATGDTAARGDRAAHGDTASGGATGGTAGNIATVDLHPSLLPLAFLVGTWRGEGVGGYEGMESFHYGQEITFAADGRPALGYVSHTWWADEPRDGREPGSPMATETGFWRVQPPATEPGPDGKVNGSPVVEVMLAHPFGIAEIYVGTVTGTRIDLDSNVLIRTATAREVTRSVRLYGLIEGGDLAYAIDMEAGGKPLQSHLSARLHRSPS.

The segment covering 1-10 has biased composition (low complexity); that stretch reads MGADATGDTA. The interval 1 to 26 is disordered; the sequence is MGADATGDTAARGDRAAHGDTASGGA. The GXWXGXG signature appears at 51–57; that stretch reads GTWRGEG. Residue H203 participates in heme b binding.

Belongs to the nitrobindin family. In terms of assembly, homodimer. It depends on heme b as a cofactor.

The enzyme catalyses peroxynitrite = nitrate. Its pathway is nitrogen metabolism. Functionally, heme-binding protein able to scavenge peroxynitrite and to protect free L-tyrosine against peroxynitrite-mediated nitration, by acting as a peroxynitrite isomerase that converts peroxynitrite to nitrate. Therefore, this protein likely plays a role in peroxynitrite sensing and in the detoxification of reactive nitrogen and oxygen species (RNS and ROS, respectively). Is able to bind nitric oxide (NO) in vitro, but may act as a sensor of peroxynitrite levels in vivo. The sequence is that of Peroxynitrite isomerase from Parafrankia sp. (strain EAN1pec).